Here is a 148-residue protein sequence, read N- to C-terminus: UPF0178 protein SH2212 (148 aa).

The protein belongs to the UPF0178 family.

In Staphylococcus haemolyticus (strain JCSC1435), this protein is UPF0178 protein SH2212.